The chain runs to 241 residues: DNA repair protein RecO (241 aa).

Belongs to the RecO family.

Involved in DNA repair and RecF pathway recombination. This Orientia tsutsugamushi (strain Boryong) (Rickettsia tsutsugamushi) protein is DNA repair protein RecO.